The following is a 264-amino-acid chain: Inner membrane ABC transporter permease protein YdcV (264 aa).

The Cytoplasmic portion of the chain corresponds to 1–12; that stretch reads MHSERAPFFLKL. The chain crosses the membrane as a helical span at residues 13 to 33; the sequence is AAWGGVVFLHFPILIIAAYAF. The Periplasmic segment spans residues 34–70; the sequence is NTEDAAFSFPPQGLTLRWFSVAAQRSDILDAVTLSLK. Residues 65–252 form the ABC transmembrane type-1 domain; that stretch reads VTLSLKVAAL…MLVTTLPILG (188 aa). Residues 71 to 91 form a helical membrane-spanning segment; that stretch reads VAALATLIALVLGTLAAAALW. At 92 to 100 the chain is on the cytoplasmic side; that stretch reads RRDFFGKNA. The helical transmembrane segment at 101–121 threads the bilayer; sequence ISLLLLLPIALPGIVTGLALL. Topologically, residues 122-128 are periplasmic; it reads TAFKTIN. The helical transmembrane segment at 129–149 threads the bilayer; the sequence is LEPGFFTIVVGHATFCVVVVF. At 150 to 189 the chain is on the cytoplasmic side; it reads NNVIARFRRTSWSLVEASMDLGANGWQTFRYVVLPNLSSA. The helical transmembrane segment at 190-210 threads the bilayer; it reads LLAGGMLAFALSFDEIIVTTF. Residues 211–236 lie on the Periplasmic side of the membrane; sequence TAGHERTLPLWLLNQLGRPRDVPVTN. Residues 237-257 form a helical membrane-spanning segment; sequence VVALLVMLVTTLPILGAWWLT. Over 258-264 the chain is Cytoplasmic; it reads REGDNGQ.

The protein belongs to the binding-protein-dependent transport system permease family. CysTW subfamily.

Its subcellular location is the cell inner membrane. In terms of biological role, probably part of the ABC transporter complex YdcSTUV. Probably responsible for the translocation of the substrate across the membrane. This is Inner membrane ABC transporter permease protein YdcV (ydcV) from Shigella flexneri.